Reading from the N-terminus, the 266-residue chain is Energy-coupling factor transporter transmembrane protein EcfT (266 aa).

Transmembrane regions (helical) follow at residues 32 to 52 (IIVV…AFTV), 71 to 91 (PLLW…PAGG), 107 to 127 (LINA…STLL), 152 to 172 (VPVD…PTLM), and 246 to 266 (DTVT…FRHW).

The protein belongs to the energy-coupling factor EcfT family. As to quaternary structure, forms a stable energy-coupling factor (ECF) transporter complex composed of 2 membrane-embedded substrate-binding proteins (S component), 2 ATP-binding proteins (A component) and 2 transmembrane proteins (T component). May be able to interact with more than 1 S component at a time.

It localises to the cell membrane. Its function is as follows. Transmembrane (T) component of an energy-coupling factor (ECF) ABC-transporter complex. Unlike classic ABC transporters this ECF transporter provides the energy necessary to transport a number of different substrates. This Levilactobacillus brevis (strain ATCC 367 / BCRC 12310 / CIP 105137 / JCM 1170 / LMG 11437 / NCIMB 947 / NCTC 947) (Lactobacillus brevis) protein is Energy-coupling factor transporter transmembrane protein EcfT.